Here is a 411-residue protein sequence, read N- to C-terminus: Arginine biosynthesis bifunctional protein ArgJ (411 aa).

Substrate contacts are provided by T160, K186, T197, E283, N406, and T411. T197 acts as the Nucleophile in catalysis.

This sequence belongs to the ArgJ family. In terms of assembly, heterotetramer of two alpha and two beta chains.

It localises to the cytoplasm. It catalyses the reaction N(2)-acetyl-L-ornithine + L-glutamate = N-acetyl-L-glutamate + L-ornithine. The catalysed reaction is L-glutamate + acetyl-CoA = N-acetyl-L-glutamate + CoA + H(+). The protein operates within amino-acid biosynthesis; L-arginine biosynthesis; L-ornithine and N-acetyl-L-glutamate from L-glutamate and N(2)-acetyl-L-ornithine (cyclic): step 1/1. It functions in the pathway amino-acid biosynthesis; L-arginine biosynthesis; N(2)-acetyl-L-ornithine from L-glutamate: step 1/4. Feedback inhibition by L-ornithine. Its function is as follows. Catalyzes two activities which are involved in the cyclic version of arginine biosynthesis: the synthesis of N-acetylglutamate from glutamate and acetyl-CoA as the acetyl donor, and of ornithine by transacetylation between N(2)-acetylornithine and glutamate. This chain is Arginine biosynthesis bifunctional protein ArgJ, found in Halalkalibacterium halodurans (strain ATCC BAA-125 / DSM 18197 / FERM 7344 / JCM 9153 / C-125) (Bacillus halodurans).